The sequence spans 330 residues: Type II methyltransferase M.MthTI (330 aa).

The SAM-dependent MTase C5-type domain maps to 3–328; that stretch reads MDIASFFSGA…KKIKKDLEGV (326 aa). Cys73 is a catalytic residue.

It belongs to the class I-like SAM-binding methyltransferase superfamily. C5-methyltransferase family.

It catalyses the reaction a 2'-deoxycytidine in DNA + S-adenosyl-L-methionine = a 5-methyl-2'-deoxycytidine in DNA + S-adenosyl-L-homocysteine + H(+). Functionally, a methylase that recognizes the double-stranded sequence 5'-GGCC-3', methylates C-3 on both strands, and protects the DNA from cleavage by the MthTI endonuclease. This is Type II methyltransferase M.MthTI (mthTIM) from Methanothermobacter thermautotrophicus (Methanobacterium thermoformicicum).